We begin with the raw amino-acid sequence, 429 residues long: 3-phosphoshikimate 1-carboxyvinyltransferase (429 aa).

Residues Lys11, Ser12, and Arg16 each contribute to the 3-phosphoshikimate site. Phosphoenolpyruvate is bound at residue Lys11. Residues Gly82 and Arg110 each coordinate phosphoenolpyruvate. 3-phosphoshikimate is bound by residues Ser155, Gln157, Asp302, and Lys329. Residue Gln157 participates in phosphoenolpyruvate binding. Catalysis depends on Asp302, which acts as the Proton acceptor. Arg333 and Arg385 together coordinate phosphoenolpyruvate.

Belongs to the EPSP synthase family. In terms of assembly, monomer.

It is found in the cytoplasm. The enzyme catalyses 3-phosphoshikimate + phosphoenolpyruvate = 5-O-(1-carboxyvinyl)-3-phosphoshikimate + phosphate. It participates in metabolic intermediate biosynthesis; chorismate biosynthesis; chorismate from D-erythrose 4-phosphate and phosphoenolpyruvate: step 6/7. Catalyzes the transfer of the enolpyruvyl moiety of phosphoenolpyruvate (PEP) to the 5-hydroxyl of shikimate-3-phosphate (S3P) to produce enolpyruvyl shikimate-3-phosphate and inorganic phosphate. The sequence is that of 3-phosphoshikimate 1-carboxyvinyltransferase from Helicobacter pylori (strain J99 / ATCC 700824) (Campylobacter pylori J99).